Here is a 70-residue protein sequence, read N- to C-terminus: Exodeoxyribonuclease 7 small subunit (70 aa).

Belongs to the XseB family. Heterooligomer composed of large and small subunits.

The protein localises to the cytoplasm. It carries out the reaction Exonucleolytic cleavage in either 5'- to 3'- or 3'- to 5'-direction to yield nucleoside 5'-phosphates.. Functionally, bidirectionally degrades single-stranded DNA into large acid-insoluble oligonucleotides, which are then degraded further into small acid-soluble oligonucleotides. This Streptococcus sanguinis (strain SK36) protein is Exodeoxyribonuclease 7 small subunit.